A 235-amino-acid chain; its full sequence is Lipoprotein-releasing system ATP-binding protein LolD (235 aa).

The region spanning 7 to 234 (LQCTNLSKRY…QQELTLMGAR (228 aa)) is the ABC transporter domain. Residue 43–50 (GSSGSGKS) participates in ATP binding.

This sequence belongs to the ABC transporter superfamily. Lipoprotein translocase (TC 3.A.1.125) family. The complex is composed of two ATP-binding proteins (LolD) and two transmembrane proteins (LolC and LolE).

It is found in the cell inner membrane. Functionally, part of the ABC transporter complex LolCDE involved in the translocation of mature outer membrane-directed lipoproteins, from the inner membrane to the periplasmic chaperone, LolA. Responsible for the formation of the LolA-lipoprotein complex in an ATP-dependent manner. The polypeptide is Lipoprotein-releasing system ATP-binding protein LolD (Pectobacterium atrosepticum (strain SCRI 1043 / ATCC BAA-672) (Erwinia carotovora subsp. atroseptica)).